The following is an 89-amino-acid chain: MSCQQNQQQCQPPPKCPAKSPAQCLPPASSSCAPSSGGCGPSSERSCCLSHHRCRRSHRCRCQSSNSCDRGSGQQGGSSSCGHSSAGCC.

Low complexity-rich tracts occupy residues 1-10 and 17-46; these read MSCQQNQQQC and PAKS…SERS. 2 disordered regions span residues 1 to 46 and 62 to 89; these read MSCQ…SERS and CQSS…AGCC.

The protein belongs to the LCE family. As to quaternary structure, interacts with CYSRT1; the interaction is direct. In terms of tissue distribution, skin-specific. Expression was readily detected in adult trunk skin, adult arm skin, fetal skin, penal skin, vulva, esophagus and tongue. Not expressed in the cervix, rectum, lung, colon, or placenta.

A structural component of the cornified envelope of the stratum corneum involved in innate cutaneous host defense. Possesses defensin-like antimicrobial activity against a broad spectrum of Gram-positive and Gram-negative bacteria, both aerobic and anaerobic species. Upon inflammation, may regulate skin barrier repair by shaping cutaneous microbiota composition and immune response to bacterial antigens. The sequence is that of Late cornified envelope protein 3A from Homo sapiens (Human).